Here is a 366-residue protein sequence, read N- to C-terminus: tRNA/tmRNA (uracil-C(5))-methyltransferase (366 aa).

Positions 190, 218, 223, 239, and 299 each coordinate S-adenosyl-L-methionine. The active-site Nucleophile is Cys-324. Residue Glu-358 is the Proton acceptor of the active site.

The protein belongs to the class I-like SAM-binding methyltransferase superfamily. RNA M5U methyltransferase family. TrmA subfamily.

It carries out the reaction uridine(54) in tRNA + S-adenosyl-L-methionine = 5-methyluridine(54) in tRNA + S-adenosyl-L-homocysteine + H(+). The enzyme catalyses uridine(341) in tmRNA + S-adenosyl-L-methionine = 5-methyluridine(341) in tmRNA + S-adenosyl-L-homocysteine + H(+). Functionally, dual-specificity methyltransferase that catalyzes the formation of 5-methyluridine at position 54 (m5U54) in all tRNAs, and that of position 341 (m5U341) in tmRNA (transfer-mRNA). This chain is tRNA/tmRNA (uracil-C(5))-methyltransferase, found in Cellvibrio japonicus (strain Ueda107) (Pseudomonas fluorescens subsp. cellulosa).